A 561-amino-acid polypeptide reads, in one-letter code: Carboxylesterase 1F (561 aa).

An N-terminal signal peptide occupies residues 1–17; the sequence is MFLSTLFLVSLATCVIC. A disulfide bridge connects residues Cys87 and Cys116. Ser221 (acyl-ester intermediate) is an active-site residue. Cys273 and Cys284 are joined by a disulfide. Active-site charge relay system residues include Glu353 and His466. Residues 558-561 carry the Prevents secretion from ER motif; it reads HNEL.

The protein belongs to the type-B carboxylesterase/lipase family. As to expression, expressed in liver, white and brown adipose tissue, kidney, intestine, adrenal, heart and ovary. Not detected in muscle, lung, testis, brain and spleen.

Its subcellular location is the lipid droplet. The protein localises to the cytoplasm. The protein resides in the cytosol. It localises to the endoplasmic reticulum. It is found in the microsome. The enzyme catalyses a carboxylic ester + H2O = an alcohol + a carboxylate + H(+). It carries out the reaction all-trans-retinyl hexadecanoate + H2O = all-trans-retinol + hexadecanoate + H(+). Functionally, involved in the detoxification of xenobiotics and in the activation of ester and amide prodrugs. Hydrolyzes retinyl esters. Hydrolyzes p-nitrophenyl butyrate (PNPB), triacylglycerol and monoacylglycerol. Shows higher activity against PNPB, a short-chain fatty acid ester, than against triolein, a long-chain fatty acid ester. Shows no detectable activity against diacylglycerol, cholesterol ester or phospholipids. May play a role in adipocyte lipolysis. The sequence is that of Carboxylesterase 1F from Mus musculus (Mouse).